The primary structure comprises 409 residues: Elongation factor Tu, chloroplastic (409 aa).

The region spanning 10–214 (KPHVNIGTIG…TVDAYIPTPE (205 aa)) is the tr-type G domain. The segment at 19–26 (GHVDHGKT) is G1. Position 19 to 26 (19 to 26 (GHVDHGKT)) interacts with GTP. Mg(2+) is bound at residue threonine 26. The tract at residues 60 to 64 (GITIN) is G2. The tract at residues 81–84 (DCPG) is G3. GTP is bound by residues 81-85 (DCPGH) and 136-139 (NKED). A G4 region spans residues 136 to 139 (NKED). The tract at residues 174-176 (SAL) is G5.

This sequence belongs to the TRAFAC class translation factor GTPase superfamily. Classic translation factor GTPase family. EF-Tu/EF-1A subfamily.

It localises to the plastid. Its subcellular location is the chloroplast. The catalysed reaction is GTP + H2O = GDP + phosphate + H(+). Functionally, GTP hydrolase that promotes the GTP-dependent binding of aminoacyl-tRNA to the A-site of ribosomes during protein biosynthesis. The sequence is that of Elongation factor Tu, chloroplastic (tufA) from Pleurastrum terricola (Filamentous green alga).